The chain runs to 342 residues: Transmembrane protein 59-like (342 aa).

The N-terminal stretch at 1–24 (MAAVALMPPPLLLLLLLASPPAAS) is a signal peptide. N-linked (GlcNAc...) asparagine glycosylation is present at N97. A helical transmembrane segment spans residues 268–290 (WILACCLFLSVLVMLWLSCSTLV). The Microbody targeting signal motif lies at 340–342 (TKL).

The protein belongs to the TMEM59 family. In terms of tissue distribution, expressed preferentially at high level in the brain.

The protein resides in the golgi apparatus membrane. In terms of biological role, modulates the O-glycosylation and complex N-glycosylation steps occurring during the Golgi maturation of APP. Inhibits APP transport to the cell surface and further shedding. The protein is Transmembrane protein 59-like (TMEM59L) of Homo sapiens (Human).